Reading from the N-terminus, the 432-residue chain is tRNA(Ile)-lysidine synthase (432 aa).

20 to 25 (SGGLDS) lines the ATP pocket.

Belongs to the tRNA(Ile)-lysidine synthase family.

The protein resides in the cytoplasm. The enzyme catalyses cytidine(34) in tRNA(Ile2) + L-lysine + ATP = lysidine(34) in tRNA(Ile2) + AMP + diphosphate + H(+). Ligates lysine onto the cytidine present at position 34 of the AUA codon-specific tRNA(Ile) that contains the anticodon CAU, in an ATP-dependent manner. Cytidine is converted to lysidine, thus changing the amino acid specificity of the tRNA from methionine to isoleucine. This Shigella flexneri protein is tRNA(Ile)-lysidine synthase.